The following is a 156-amino-acid chain: Small ribosomal subunit protein uS7 (156 aa).

Belongs to the universal ribosomal protein uS7 family. Part of the 30S ribosomal subunit. Contacts proteins S9 and S11.

In terms of biological role, one of the primary rRNA binding proteins, it binds directly to 16S rRNA where it nucleates assembly of the head domain of the 30S subunit. Is located at the subunit interface close to the decoding center, probably blocks exit of the E-site tRNA. The polypeptide is Small ribosomal subunit protein uS7 (Dinoroseobacter shibae (strain DSM 16493 / NCIMB 14021 / DFL 12)).